The sequence spans 236 residues: tRNA (guanine-N(7)-)-methyltransferase (236 aa).

The S-adenosyl-L-methionine site is built by Asp-35, Glu-60, Asn-87, and Asp-113. Residue Asp-113 is part of the active site. Substrate contacts are provided by Lys-117 and Asp-149. Residues 217-236 (EFEQHWQEIDNPGNAPTPDA) are disordered.

Belongs to the class I-like SAM-binding methyltransferase superfamily. TrmB family.

The catalysed reaction is guanosine(46) in tRNA + S-adenosyl-L-methionine = N(7)-methylguanosine(46) in tRNA + S-adenosyl-L-homocysteine. The protein operates within tRNA modification; N(7)-methylguanine-tRNA biosynthesis. Its function is as follows. Catalyzes the formation of N(7)-methylguanine at position 46 (m7G46) in tRNA. The protein is tRNA (guanine-N(7)-)-methyltransferase of Synechococcus sp. (strain CC9902).